A 509-amino-acid chain; its full sequence is MQDTAKYLVHADITADGVVERSDVVGAVFGQTEGLLGDELDLRELQDASKVGRIDVEIDSENGQSFGRITIATSLDRVETAILGGALETIDRVGPCRSAIEVRKIEDVRSAKRREVVERAKSLLDGAFDESMRSSRDLVEEVRESVRVEDITDYEGLPAGPAVADSDAIVVVEGRADVLTLLQYGIKNAVAVEGTNVPEAVASLTETRTVTAFLDNDRGGELIRKELGQVGDIDYVATPPDGKCVEDLARHEVMSALREKVPYGRFKQAASDDADPEAAEQRTGEAAGATAADSEPAATDGIGGVTTDAEGKPVSSPESPAESPAADETAAVSAGTTPADAEEAAVDGATKTSTAGEEPNTPDDELTATSEAAEPGSAETKGESTAAEAPESSADGPAAAGASTDEQPKTLRGHVSDVIEAETGTFRLLDAEFAPLAAGDAGDVFEAVADAETVPAAVVVDGEASQRLLDIAAQRGIDHVVAASTGEFVKRPTSVRVRTATQLLNPEKA.

One can recognise a Toprim domain in the interval 167–253; the sequence is DAIVVVEGRA…CVEDLARHEV (87 aa). Residues glutamate 173, aspartate 215, and aspartate 217 each contribute to the Mg(2+) site. Residues 267 to 411 form a disordered region; it reads KQAASDDADP…ASTDEQPKTL (145 aa). Composition is skewed to low complexity over residues 313 to 331 and 383 to 402; these read PVSSPESPAESPAADETAA and ESTAAEAPESSADGPAAAGA.

It belongs to the archaeal DnaG primase family. As to quaternary structure, forms a ternary complex with MCM helicase and DNA. Mg(2+) serves as cofactor.

It carries out the reaction ssDNA + n NTP = ssDNA/pppN(pN)n-1 hybrid + (n-1) diphosphate.. Its function is as follows. RNA polymerase that catalyzes the synthesis of short RNA molecules used as primers for DNA polymerase during DNA replication. In Natronomonas pharaonis (strain ATCC 35678 / DSM 2160 / CIP 103997 / JCM 8858 / NBRC 14720 / NCIMB 2260 / Gabara) (Halobacterium pharaonis), this protein is DNA primase DnaG.